Consider the following 193-residue polypeptide: MSNISLIVGLGNPGSEYAQTRHNAGFWFVEQLADKYGITLKNDPKFHGISGRGNIEGHDVRLLLPMTYMNRSGQSVVPFSKFYQIAPEAILIAHDELDMNPGVIRLKTGGGHGGHNGLRDIVPHIGPNFHRLRIGIGHPGSKERVSGHVLGKAPSSEQSLMDGAIDHALSKVKLLVQGQVPQAMNQINAYKPA.

Y17 contacts tRNA. The active-site Proton acceptor is the H22. Positions 68, 70, and 116 each coordinate tRNA.

The protein belongs to the PTH family. In terms of assembly, monomer.

The protein localises to the cytoplasm. It catalyses the reaction an N-acyl-L-alpha-aminoacyl-tRNA + H2O = an N-acyl-L-amino acid + a tRNA + H(+). Hydrolyzes ribosome-free peptidyl-tRNAs (with 1 or more amino acids incorporated), which drop off the ribosome during protein synthesis, or as a result of ribosome stalling. In terms of biological role, catalyzes the release of premature peptidyl moieties from peptidyl-tRNA molecules trapped in stalled 50S ribosomal subunits, and thus maintains levels of free tRNAs and 50S ribosomes. This Acinetobacter baumannii (strain AB307-0294) protein is Peptidyl-tRNA hydrolase.